Here is a 307-residue protein sequence, read N- to C-terminus: Myeloid-associated differentiation marker-like protein 2 (307 aa).

2 consecutive MARVEL domains span residues 17–154 and 159–303; these read AVTS…ARPG and YMAT…RIRF. Transmembrane regions (helical) follow at residues 53–73, 90–110, 129–149, 163–183, 198–218, 232–252, and 278–298; these read FCMA…ACEF, AFAM…PLYF, LAAS…VALT, VSGL…GALV, VAVY…SVMG, IVYT…WPVF, and LVVA…LAYS.

The protein belongs to the MAL family.

It localises to the membrane. This chain is Myeloid-associated differentiation marker-like protein 2 (Myadml2), found in Mus musculus (Mouse).